The chain runs to 301 residues: tRNA-cytidine(32) 2-sulfurtransferase (301 aa).

The PP-loop motif motif lies at 47–52 (SGGKDS). The [4Fe-4S] cluster site is built by C122, C125, and C213.

The protein belongs to the TtcA family. In terms of assembly, homodimer. It depends on Mg(2+) as a cofactor. Requires [4Fe-4S] cluster as cofactor.

The protein resides in the cytoplasm. It carries out the reaction cytidine(32) in tRNA + S-sulfanyl-L-cysteinyl-[cysteine desulfurase] + AH2 + ATP = 2-thiocytidine(32) in tRNA + L-cysteinyl-[cysteine desulfurase] + A + AMP + diphosphate + H(+). It participates in tRNA modification. Functionally, catalyzes the ATP-dependent 2-thiolation of cytidine in position 32 of tRNA, to form 2-thiocytidine (s(2)C32). The sulfur atoms are provided by the cysteine/cysteine desulfurase (IscS) system. In Photobacterium profundum (strain SS9), this protein is tRNA-cytidine(32) 2-sulfurtransferase.